The primary structure comprises 447 residues: MLHYEDRIDLYDERGKLLEENVPLEAISPLKNPTIEKIVNDIKRSVAINLAGIENALKTGAVGGKACFCPGRELDLPIVENAEIIAEKIKRMVQIEEDDDTVVKLINGGKQLLLQLPSKRLRVAADYTVSALIGGGATVQAIVDAFDVDMFDAPVVKTAVMGRYPQTVDFHGANIATLLGPPVLLEGLGYGLRNIMANHIVAVTRKKTLNAVALASILEQTAMFETGDALGAFERLHLLGLAFQGLNANNLTYELVKENGKDGTVGTVVASVVERALEDGVIRPLKTMPSGFTVYEPVDWALWNAYAASGLVAAVIVNVGAARAAQGVASTVLYYNDILEYETGLPSVDFGRAEGTAVGFSFFSHSIYGGGGPGTFHGNHVVTRHSKGFAIPCAAAAMCLDAGTQMFSVERTSALVGTVYSAIDHLREPLKYVAEGAVEVKEKEKVI.

Tyr-368 contacts coenzyme M. Gly-370 lines the coenzyme B pocket.

It belongs to the methyl-coenzyme M reductase beta subunit family. As to quaternary structure, MCR is a hexamer of two alpha, two beta, and two gamma chains, forming a dimer of heterotrimers. Requires coenzyme F430 as cofactor.

It catalyses the reaction coenzyme B + methyl-coenzyme M = methane + coenzyme M-coenzyme B heterodisulfide. Its pathway is one-carbon metabolism; methyl-coenzyme M reduction; methane from methyl-coenzyme M: step 1/1. In terms of biological role, component of the methyl-coenzyme M reductase (MCR) I that catalyzes the reductive cleavage of methyl-coenzyme M (CoM-S-CH3 or 2-(methylthio)ethanesulfonate) using coenzyme B (CoB or 7-mercaptoheptanoylthreonine phosphate) as reductant which results in the production of methane and the mixed heterodisulfide of CoB and CoM (CoM-S-S-CoB). This is the final step in methanogenesis. This chain is Methyl-coenzyme M reductase II subunit beta (mrtB), found in Methanocaldococcus jannaschii (strain ATCC 43067 / DSM 2661 / JAL-1 / JCM 10045 / NBRC 100440) (Methanococcus jannaschii).